Reading from the N-terminus, the 218-residue chain is ATP-dependent dethiobiotin synthetase BioD (218 aa).

9 to 15 is a binding site for ATP; sequence TNAGKTT. A Mg(2+)-binding site is contributed by Thr14. Lys35 is an active-site residue. Lys35 lines the phosphate pocket. Thr39 is a binding site for substrate. ATP contacts are provided by residues Asp50, Glu116, and 116–119; that span reads EGAG. Residues Asp50 and Glu116 each contribute to the Mg(2+) site. Position 116-119 (116-119) interacts with phosphate; that stretch reads EGAG. 151–154 provides a ligand contact to substrate; sequence GLIN. Residues Asn175 and 175 to 177 each bind ATP; that span reads NLK.

This sequence belongs to the dethiobiotin synthetase family. Homodimer. The cofactor is Mg(2+).

The protein localises to the cytoplasm. It catalyses the reaction (7R,8S)-7,8-diammoniononanoate + CO2 + ATP = (4R,5S)-dethiobiotin + ADP + phosphate + 3 H(+). It participates in cofactor biosynthesis; biotin biosynthesis; biotin from 7,8-diaminononanoate: step 1/2. Functionally, catalyzes a mechanistically unusual reaction, the ATP-dependent insertion of CO2 between the N7 and N8 nitrogen atoms of 7,8-diaminopelargonic acid (DAPA, also called 7,8-diammoniononanoate) to form a ureido ring. The sequence is that of ATP-dependent dethiobiotin synthetase BioD from Helicobacter pylori (strain ATCC 700392 / 26695) (Campylobacter pylori).